Reading from the N-terminus, the 397-residue chain is Elongation factor Tu (397 aa).

Positions 10–207 (KPHVNIGTIG…AVDTYIEEPK (198 aa)) constitute a tr-type G domain. The G1 stretch occupies residues 19 to 26 (GHVDHGKT). 19 to 26 (GHVDHGKT) is a GTP binding site. Thr-26 is a binding site for Mg(2+). The interval 60–64 (GITIN) is G2. A G3 region spans residues 81-84 (DCPG). GTP-binding positions include 81–85 (DCPGH) and 136–139 (NKID). The interval 136–139 (NKID) is G4. The interval 177 to 179 (SAL) is G5.

The protein belongs to the TRAFAC class translation factor GTPase superfamily. Classic translation factor GTPase family. EF-Tu/EF-1A subfamily. Monomer.

Its subcellular location is the cytoplasm. It catalyses the reaction GTP + H2O = GDP + phosphate + H(+). Functionally, GTP hydrolase that promotes the GTP-dependent binding of aminoacyl-tRNA to the A-site of ribosomes during protein biosynthesis. The protein is Elongation factor Tu of Metamycoplasma hominis (strain ATCC 23114 / DSM 25592 / NBRC 14850 / NCTC 10111 / PG21) (Mycoplasma hominis).